The primary structure comprises 165 residues: MEDRAGQQERPSLRLEKLQHWARHRQSGRLLVLAVSQLWLAVAVVPFAVSVACLNSACHMTTALPLGPGILGLLTGIVTLELRRAPRLWKLAGLLVLELSAEAFTLGGVLVSAYSLFLLSQRKPRCCRSQSLRYQELQEGLSELEEVPELETGPTVASTAKRTNQ.

3 consecutive transmembrane segments (helical) span residues 31–51 (LVLAVSQLWLAVAVVPFAVSV), 60–80 (MTTALPLGPGILGLLTGIVTL), and 91–111 (LAGLLVLELSAEAFTLGGVLV). The segment at 145-165 (EEVPELETGPTVASTAKRTNQ) is disordered. The segment covering 155–165 (TVASTAKRTNQ) has biased composition (polar residues).

It is found in the membrane. The polypeptide is Transmembrane protein 253 (TMEM253) (Bos taurus (Bovine)).